Consider the following 847-residue polypeptide: Alanine--tRNA ligase (847 aa).

The Zn(2+) site is built by H554, H558, C656, and H660.

Belongs to the class-II aminoacyl-tRNA synthetase family. Requires Zn(2+) as cofactor.

Its subcellular location is the cytoplasm. It carries out the reaction tRNA(Ala) + L-alanine + ATP = L-alanyl-tRNA(Ala) + AMP + diphosphate. Functionally, catalyzes the attachment of alanine to tRNA(Ala) in a two-step reaction: alanine is first activated by ATP to form Ala-AMP and then transferred to the acceptor end of tRNA(Ala). Also edits incorrectly charged Ser-tRNA(Ala) and Gly-tRNA(Ala) via its editing domain. The chain is Alanine--tRNA ligase from Helicobacter acinonychis (strain Sheeba).